The sequence spans 501 residues: Proline--tRNA ligase (501 aa).

Belongs to the class-II aminoacyl-tRNA synthetase family. ProS type 3 subfamily. Homodimer.

The protein resides in the cytoplasm. The catalysed reaction is tRNA(Pro) + L-proline + ATP = L-prolyl-tRNA(Pro) + AMP + diphosphate. In terms of biological role, catalyzes the attachment of proline to tRNA(Pro) in a two-step reaction: proline is first activated by ATP to form Pro-AMP and then transferred to the acceptor end of tRNA(Pro). The polypeptide is Proline--tRNA ligase (Halobacterium salinarum (strain ATCC 29341 / DSM 671 / R1)).